Reading from the N-terminus, the 358-residue chain is Ion-translocating oxidoreductase complex subunit D (358 aa).

4 helical membrane passes run 19–39 (IMLWVILAMMPAFFTQIYYFG), 41–61 (GVLLQSALAIGTAIIAEFIAI), 79–99 (LTALILAMAIPPYAPYWVIII), and 125–145 (IGYVILLISFPLQMTTWMPPI). Residue threonine 186 is modified to FMN phosphoryl threonine. The next 5 helical transmembrane spans lie at 220–240 (FAQGWWQINVAFLAGGIFLIL), 248–268 (IPVAMLVTFFCLATATAFTGF), 271–291 (LSAISQLVSGAMMFGAFFIAT), 297–317 (SITPRGKIIFGALVGLFVYLI), and 321–341 (GNYPDGVAFAILLSNICVPLI).

The protein belongs to the NqrB/RnfD family. In terms of assembly, the complex is composed of six subunits: RnfA, RnfB, RnfC, RnfD, RnfE and RnfG. FMN serves as cofactor.

The protein localises to the cell inner membrane. In terms of biological role, part of a membrane-bound complex that couples electron transfer with translocation of ions across the membrane. The chain is Ion-translocating oxidoreductase complex subunit D from Haemophilus influenzae (strain PittEE).